Consider the following 79-residue polypeptide: ATP synthase subunit c (79 aa).

2 helical membrane-spanning segments follow: residues 11-31 (IAVA…IGIL) and 53-73 (FFVV…LGLY).

This sequence belongs to the ATPase C chain family. As to quaternary structure, F-type ATPases have 2 components, F(1) - the catalytic core - and F(0) - the membrane proton channel. F(1) has five subunits: alpha(3), beta(3), gamma(1), delta(1), epsilon(1). F(0) has three main subunits: a(1), b(2) and c(10-14). The alpha and beta chains form an alternating ring which encloses part of the gamma chain. F(1) is attached to F(0) by a central stalk formed by the gamma and epsilon chains, while a peripheral stalk is formed by the delta and b chains.

It is found in the cell membrane. Its function is as follows. F(1)F(0) ATP synthase produces ATP from ADP in the presence of a proton or sodium gradient. F-type ATPases consist of two structural domains, F(1) containing the extramembraneous catalytic core and F(0) containing the membrane proton channel, linked together by a central stalk and a peripheral stalk. During catalysis, ATP synthesis in the catalytic domain of F(1) is coupled via a rotary mechanism of the central stalk subunits to proton translocation. Key component of the F(0) channel; it plays a direct role in translocation across the membrane. A homomeric c-ring of between 10-14 subunits forms the central stalk rotor element with the F(1) delta and epsilon subunits. This Buchnera aphidicola subsp. Schizaphis graminum (strain Sg) protein is ATP synthase subunit c.